The primary structure comprises 83 residues: Cytochrome b559 subunit alpha (83 aa).

Residues 21 to 35 (IIHSITIPSLFIAGW) traverse the membrane as a helical segment. Residue histidine 23 coordinates heme.

It belongs to the PsbE/PsbF family. Heterodimer of an alpha subunit and a beta subunit. PSII is composed of 1 copy each of membrane proteins PsbA, PsbB, PsbC, PsbD, PsbE, PsbF, PsbH, PsbI, PsbJ, PsbK, PsbL, PsbM, PsbT, PsbX, PsbY, PsbZ, Psb30/Ycf12, at least 3 peripheral proteins of the oxygen-evolving complex and a large number of cofactors. It forms dimeric complexes. Heme b is required as a cofactor.

The protein resides in the plastid. It is found in the chloroplast thylakoid membrane. This b-type cytochrome is tightly associated with the reaction center of photosystem II (PSII). PSII is a light-driven water:plastoquinone oxidoreductase that uses light energy to abstract electrons from H(2)O, generating O(2) and a proton gradient subsequently used for ATP formation. It consists of a core antenna complex that captures photons, and an electron transfer chain that converts photonic excitation into a charge separation. The polypeptide is Cytochrome b559 subunit alpha (Lotus japonicus (Lotus corniculatus var. japonicus)).